A 363-amino-acid polypeptide reads, in one-letter code: UDP-N-acetylglucosamine--N-acetylmuramyl-(pentapeptide) pyrophosphoryl-undecaprenol N-acetylglucosamine transferase (363 aa).

UDP-N-acetyl-alpha-D-glucosamine-binding positions include 7-9 (TGG), asparagine 125, serine 196, isoleucine 251, and glutamine 296.

The protein belongs to the glycosyltransferase 28 family. MurG subfamily.

It is found in the cell membrane. The enzyme catalyses Mur2Ac(oyl-L-Ala-gamma-D-Glu-L-Lys-D-Ala-D-Ala)-di-trans,octa-cis-undecaprenyl diphosphate + UDP-N-acetyl-alpha-D-glucosamine = beta-D-GlcNAc-(1-&gt;4)-Mur2Ac(oyl-L-Ala-gamma-D-Glu-L-Lys-D-Ala-D-Ala)-di-trans,octa-cis-undecaprenyl diphosphate + UDP + H(+). It participates in cell wall biogenesis; peptidoglycan biosynthesis. Its function is as follows. Cell wall formation. Catalyzes the transfer of a GlcNAc subunit on undecaprenyl-pyrophosphoryl-MurNAc-pentapeptide (lipid intermediate I) to form undecaprenyl-pyrophosphoryl-MurNAc-(pentapeptide)GlcNAc (lipid intermediate II). The chain is UDP-N-acetylglucosamine--N-acetylmuramyl-(pentapeptide) pyrophosphoryl-undecaprenol N-acetylglucosamine transferase from Latilactobacillus sakei subsp. sakei (strain 23K) (Lactobacillus sakei subsp. sakei).